Reading from the N-terminus, the 318-residue chain is NADH-ubiquinone oxidoreductase chain 1 (318 aa).

Helical transmembrane passes span 2–22, 76–96, 102–122, 146–166, 171–191, 217–237, 253–273, and 294–314; these read FMIN…FLTL, TLAL…YPLI, LLFI…SGWA, LAII…STLI, YLWL…STLA, AGPF…MNAL, ETYT…FLWV, and LPLT…ASCI.

It belongs to the complex I subunit 1 family. In terms of assembly, core subunit of respiratory chain NADH dehydrogenase (Complex I) which is composed of 45 different subunits.

Its subcellular location is the mitochondrion inner membrane. It catalyses the reaction a ubiquinone + NADH + 5 H(+)(in) = a ubiquinol + NAD(+) + 4 H(+)(out). Core subunit of the mitochondrial membrane respiratory chain NADH dehydrogenase (Complex I) which catalyzes electron transfer from NADH through the respiratory chain, using ubiquinone as an electron acceptor. Essential for the catalytic activity and assembly of complex I. In Lemur catta (Ring-tailed lemur), this protein is NADH-ubiquinone oxidoreductase chain 1 (MT-ND1).